The sequence spans 191 residues: Probable DNA-directed RNA polymerase subunit delta (191 aa).

Residues 14–83 (LSMIEVARAI…GDNKWGLRSW (70 aa)) form the HTH HARE-type domain. Composition is skewed to acidic residues over residues 119–133 (EDAI…EDEN) and 143–191 (YDND…ETND). The segment at 119–191 (EDAIDYNDDD…DDDYEDETND (73 aa)) is disordered.

Belongs to the RpoE family. In terms of assembly, RNAP is composed of a core of 2 alpha, a beta and a beta' subunits. The core is associated with a delta subunit and one of several sigma factors.

Functionally, participates in both the initiation and recycling phases of transcription. In the presence of the delta subunit, RNAP displays an increased specificity of transcription, a decreased affinity for nucleic acids, and an increased efficiency of RNA synthesis because of enhanced recycling. This is Probable DNA-directed RNA polymerase subunit delta from Streptococcus thermophilus (strain ATCC BAA-491 / LMD-9).